The primary structure comprises 459 residues: ATP-binding protein Uup-like (459 aa).

One can recognise an ABC transporter domain in the interval 132-350 (FEMEDVSYEI…QQANFWASKA (219 aa)). 164 to 171 (GPNGCGKT) lines the ATP pocket. A compositionally biased stretch (basic and acidic residues) spans 357 to 375 (AKKSEPLKEESAVKNDRTS). Positions 357–381 (AKKSEPLKEESAVKNDRTSKPKSVK) are disordered.

The protein belongs to the ABC transporter superfamily. ABCF family. Uup subfamily.

The protein resides in the cytoplasm. It carries out the reaction ATP + H2O = ADP + phosphate + H(+). Its function is as follows. Might play a role in ribosome assembly or function; this is missing the first ABC transporter domain compared to paralogs. This is ATP-binding protein Uup-like (uup-B) from Haemophilus influenzae (strain ATCC 51907 / DSM 11121 / KW20 / Rd).